We begin with the raw amino-acid sequence, 275 residues long: UDP-Gal:alpha-D-GlcNAc-diphosphoundecaprenol beta-1,3-galactosyltransferase (275 aa).

The protein belongs to the glycosyltransferase 2 family. The cofactor is Mn(2+).

The protein resides in the cell inner membrane. The enzyme catalyses N-acetyl-alpha-D-glucosaminyl-di-trans,octa-cis-undecaprenyl diphosphate + UDP-alpha-D-galactose = beta-D-Gal-(1-&gt;3)-alpha-D-GlcNAc-di-trans,octa-cis-undecaprenyl diphosphate + UDP + H(+). The protein operates within bacterial outer membrane biogenesis; LPS O-antigen biosynthesis. Its function is as follows. Catalyzes the addition of Gal, the second sugar moiety of the O7-antigen repeating unit, to GlcNAc-pyrophosphate-undecaprenol. In Escherichia coli, this protein is UDP-Gal:alpha-D-GlcNAc-diphosphoundecaprenol beta-1,3-galactosyltransferase (wbbD).